A 427-amino-acid chain; its full sequence is 3-phosphoshikimate 1-carboxyvinyltransferase (427 aa).

3-phosphoshikimate contacts are provided by K22, S23, and R27. K22 contacts phosphoenolpyruvate. The phosphoenolpyruvate site is built by G96 and R124. 3-phosphoshikimate contacts are provided by S169, S170, Q171, S197, D313, N336, and K340. Q171 is a phosphoenolpyruvate binding site. The active-site Proton acceptor is D313. 3 residues coordinate phosphoenolpyruvate: R344, R386, and K411.

It belongs to the EPSP synthase family. Monomer.

The protein resides in the cytoplasm. The enzyme catalyses 3-phosphoshikimate + phosphoenolpyruvate = 5-O-(1-carboxyvinyl)-3-phosphoshikimate + phosphate. The protein operates within metabolic intermediate biosynthesis; chorismate biosynthesis; chorismate from D-erythrose 4-phosphate and phosphoenolpyruvate: step 6/7. Its function is as follows. Catalyzes the transfer of the enolpyruvyl moiety of phosphoenolpyruvate (PEP) to the 5-hydroxyl of shikimate-3-phosphate (S3P) to produce enolpyruvyl shikimate-3-phosphate and inorganic phosphate. The sequence is that of 3-phosphoshikimate 1-carboxyvinyltransferase from Escherichia coli (strain SMS-3-5 / SECEC).